The sequence spans 111 residues: MKFLLGTLVVLATFVTLCNSQCYFIPNQSLKPNECQDLKGVSHPLNSVWKTKDCEECTCGQNAISCCNTAAIPTGYDTNKCQKILNKKTCTYTVVEKKDPGKTCDVTGWVL.

Positions 1 to 20 are cleaved as a signal peptide; that stretch reads MKFLLGTLVVLATFVTLCNS. The residue at position 21 (Gln21) is a Pyrrolidone carboxylic acid. Cystine bridges form between Cys22–Cys67, Cys35–Cys59, Cys54–Cys90, Cys57–Cys66, and Cys81–Cys104.

The protein belongs to the beta-microseminoprotein family. As to quaternary structure, homodimer; Interacts with PI16. Corpora lutea, mostly in the luteal cells surrounding blood vessels.

It is found in the secreted. This Sus scrofa (Pig) protein is Beta-microseminoprotein (MSMB).